The sequence spans 332 residues: Holliday junction branch migration complex subunit RuvB (332 aa).

The tract at residues 1 to 181 is large ATPase domain (RuvB-L); that stretch reads MSRILDNEMM…FGITGHMEYY (181 aa). Residues Leu20, Arg21, Gly62, Lys65, Thr66, Thr67, 128–130, Arg171, Tyr181, and Arg218 each bind ATP; that span reads EDF. Position 66 (Thr66) interacts with Mg(2+). A small ATPAse domain (RuvB-S) region spans residues 182–252; sequence AHADLTEIVE…ITDKALTMLD (71 aa). The head domain (RuvB-H) stretch occupies residues 255-332; sequence HEGLDYVDQK…EHLGYEYSEK (78 aa). Positions 291, 310, 312, and 315 each coordinate DNA.

Belongs to the RuvB family. As to quaternary structure, homohexamer. Forms an RuvA(8)-RuvB(12)-Holliday junction (HJ) complex. HJ DNA is sandwiched between 2 RuvA tetramers; dsDNA enters through RuvA and exits via RuvB. An RuvB hexamer assembles on each DNA strand where it exits the tetramer. Each RuvB hexamer is contacted by two RuvA subunits (via domain III) on 2 adjacent RuvB subunits; this complex drives branch migration. In the full resolvosome a probable DNA-RuvA(4)-RuvB(12)-RuvC(2) complex forms which resolves the HJ.

The protein resides in the cytoplasm. It carries out the reaction ATP + H2O = ADP + phosphate + H(+). In terms of biological role, the RuvA-RuvB-RuvC complex processes Holliday junction (HJ) DNA during genetic recombination and DNA repair, while the RuvA-RuvB complex plays an important role in the rescue of blocked DNA replication forks via replication fork reversal (RFR). RuvA specifically binds to HJ cruciform DNA, conferring on it an open structure. The RuvB hexamer acts as an ATP-dependent pump, pulling dsDNA into and through the RuvAB complex. RuvB forms 2 homohexamers on either side of HJ DNA bound by 1 or 2 RuvA tetramers; 4 subunits per hexamer contact DNA at a time. Coordinated motions by a converter formed by DNA-disengaged RuvB subunits stimulates ATP hydrolysis and nucleotide exchange. Immobilization of the converter enables RuvB to convert the ATP-contained energy into a lever motion, pulling 2 nucleotides of DNA out of the RuvA tetramer per ATP hydrolyzed, thus driving DNA branch migration. The RuvB motors rotate together with the DNA substrate, which together with the progressing nucleotide cycle form the mechanistic basis for DNA recombination by continuous HJ branch migration. Branch migration allows RuvC to scan DNA until it finds its consensus sequence, where it cleaves and resolves cruciform DNA. The chain is Holliday junction branch migration complex subunit RuvB from Streptococcus pneumoniae serotype 4 (strain ATCC BAA-334 / TIGR4).